A 278-amino-acid polypeptide reads, in one-letter code: MIEWKTFCTIFWQRFNQNKLTQAAGYLTYSTMLAIVPLIMVVFSIFSAFPVFNEVTGALKEFIFTNFAPSASDVVGQYIDEFVNNSKQMSAVGIISLIVVALMLINSIDRTLNSIWHDTSTRPIFTSFAIYWLILTLGPLLVGTSIAASAYVKTMFENASGFSFGLKLLSFVPFLSTWFIFTVIYMVVPNKKVSIKHSAAGALIAAVFFTLGKQAFAWYIVTFPSYQLIYGAMATLPIMLLWIQLSWTFVLLGAQLAAVLAEVRSEKMINLEQIEETK.

Transmembrane regions (helical) follow at residues 32 to 52 (MLAI…FPVF), 88 to 108 (QMSA…INSI), 123 to 143 (PIFT…LLVG), 168 to 188 (LLSF…YMVV), 203 to 223 (LIAA…IVTF), and 232 to 252 (AMAT…FVLL).

It belongs to the UPF0761 family.

The protein resides in the cell inner membrane. The protein is UPF0761 membrane protein NT05HA_1801 of Aggregatibacter aphrophilus (strain NJ8700) (Haemophilus aphrophilus).